Reading from the N-terminus, the 197-residue chain is Imidazoleglycerol-phosphate dehydratase (197 aa).

Belongs to the imidazoleglycerol-phosphate dehydratase family.

The protein localises to the cytoplasm. It catalyses the reaction D-erythro-1-(imidazol-4-yl)glycerol 3-phosphate = 3-(imidazol-4-yl)-2-oxopropyl phosphate + H2O. It participates in amino-acid biosynthesis; L-histidine biosynthesis; L-histidine from 5-phospho-alpha-D-ribose 1-diphosphate: step 6/9. This Erythrobacter litoralis (strain HTCC2594) protein is Imidazoleglycerol-phosphate dehydratase.